Reading from the N-terminus, the 345-residue chain is Ferrochelatase (345 aa).

Residues His-192 and Glu-295 each coordinate Fe cation.

Belongs to the ferrochelatase family.

Its subcellular location is the cytoplasm. The enzyme catalyses heme b + 2 H(+) = protoporphyrin IX + Fe(2+). The protein operates within porphyrin-containing compound metabolism; protoheme biosynthesis; protoheme from protoporphyrin-IX: step 1/1. Catalyzes the ferrous insertion into protoporphyrin IX. This is Ferrochelatase from Opitutus terrae (strain DSM 11246 / JCM 15787 / PB90-1).